The sequence spans 156 residues: Probable cyclic pyranopterin monophosphate synthase (156 aa).

Substrate is bound by residues 74–76 (LCH) and 110–111 (ME). Asp-125 is an active-site residue.

Belongs to the MoaC family. As to quaternary structure, homohexamer; trimer of dimers.

It catalyses the reaction (8S)-3',8-cyclo-7,8-dihydroguanosine 5'-triphosphate = cyclic pyranopterin phosphate + diphosphate. It functions in the pathway cofactor biosynthesis; molybdopterin biosynthesis. Catalyzes the conversion of (8S)-3',8-cyclo-7,8-dihydroguanosine 5'-triphosphate to cyclic pyranopterin monophosphate (cPMP). The protein is Probable cyclic pyranopterin monophosphate synthase of Thermococcus onnurineus (strain NA1).